The primary structure comprises 252 residues: Pantothenate synthetase (252 aa).

29 to 36 contributes to the ATP binding site; sequence MGNLHAGH. His36 (proton donor) is an active-site residue. Gln60 is a (R)-pantoate binding site. Gln60 serves as a coordination point for beta-alanine. 146-149 serves as a coordination point for ATP; it reads GEKD. Residue Gln152 participates in (R)-pantoate binding. ATP contacts are provided by residues Val175 and 183-186; that span reads CSSR.

This sequence belongs to the pantothenate synthetase family. Homodimer.

It localises to the cytoplasm. The catalysed reaction is (R)-pantoate + beta-alanine + ATP = (R)-pantothenate + AMP + diphosphate + H(+). Its pathway is cofactor biosynthesis; (R)-pantothenate biosynthesis; (R)-pantothenate from (R)-pantoate and beta-alanine: step 1/1. Catalyzes the condensation of pantoate with beta-alanine in an ATP-dependent reaction via a pantoyl-adenylate intermediate. The protein is Pantothenate synthetase of Legionella pneumophila (strain Corby).